A 126-amino-acid polypeptide reads, in one-letter code: Probable small nuclear ribonucleoprotein Sm D1 (126 aa).

One can recognise a Sm domain in the interval 2–74 (KLVRFLMKLS…IRYIILPDPL (73 aa)). Positions 86–126 (RKKARAARAGASRGRGRGGMRGGRGGRGRGRGGPRGGGPRR) are disordered. Residues 99–126 (GRGRGGMRGGRGGRGRGRGGPRGGGPRR) show a composition bias toward basic residues.

It belongs to the snRNP core protein family.

Its subcellular location is the nucleus. It is found in the cytoplasm. It localises to the cytosol. Plays a role in pre-mRNA splicing as a core component of the spliceosomal U1, U2, U4 and U5 small nuclear ribonucleoproteins (snRNPs), the building blocks of the spliceosome. This Caenorhabditis elegans protein is Probable small nuclear ribonucleoprotein Sm D1 (snr-3).